Here is a 368-residue protein sequence, read N- to C-terminus: UDP-N-acetylglucosamine--N-acetylmuramyl-(pentapeptide) pyrophosphoryl-undecaprenol N-acetylglucosamine transferase (368 aa).

UDP-N-acetyl-alpha-D-glucosamine is bound by residues 10–12 (TGG), N126, S200, I255, and Q300.

The protein belongs to the glycosyltransferase 28 family. MurG subfamily.

It localises to the cell membrane. The catalysed reaction is Mur2Ac(oyl-L-Ala-gamma-D-Glu-L-Lys-D-Ala-D-Ala)-di-trans,octa-cis-undecaprenyl diphosphate + UDP-N-acetyl-alpha-D-glucosamine = beta-D-GlcNAc-(1-&gt;4)-Mur2Ac(oyl-L-Ala-gamma-D-Glu-L-Lys-D-Ala-D-Ala)-di-trans,octa-cis-undecaprenyl diphosphate + UDP + H(+). Its pathway is cell wall biogenesis; peptidoglycan biosynthesis. Cell wall formation. Catalyzes the transfer of a GlcNAc subunit on undecaprenyl-pyrophosphoryl-MurNAc-pentapeptide (lipid intermediate I) to form undecaprenyl-pyrophosphoryl-MurNAc-(pentapeptide)GlcNAc (lipid intermediate II). The polypeptide is UDP-N-acetylglucosamine--N-acetylmuramyl-(pentapeptide) pyrophosphoryl-undecaprenol N-acetylglucosamine transferase (Lactobacillus acidophilus (strain ATCC 700396 / NCK56 / N2 / NCFM)).